The chain runs to 826 residues: Periplasmic nitrate reductase (826 aa).

A signal peptide (tat-type signal) is located at residues 1–32; the sequence is MELNRRDFMKANAAIAAAAAAGITIPVKNVQA. The 4Fe-4S Mo/W bis-MGD-type domain occupies 37–93; sequence IRWDKAPCRYCGTGCSVLVGTKDGRVVATQGDPDAEVNRGLNCIKGYFLSKIMYGAD. 4 residues coordinate [4Fe-4S] cluster: cysteine 44, cysteine 47, cysteine 51, and cysteine 79. Mo-bis(molybdopterin guanine dinucleotide)-binding positions include lysine 81, glutamine 148, asparagine 173, cysteine 177, 210-217, 241-245, 260-262, methionine 370, glutamine 374, asparagine 480, 506-507, lysine 529, aspartate 556, and 716-725; these read WGSNMAEM, STYEH, QSD, SD, and TGRVLEHWHT. Residue phenylalanine 792 participates in substrate binding. Mo-bis(molybdopterin guanine dinucleotide) contacts are provided by asparagine 800 and lysine 817.

It belongs to the prokaryotic molybdopterin-containing oxidoreductase family. NasA/NapA/NarB subfamily. In terms of assembly, component of the periplasmic nitrate reductase NapAB complex composed of NapA and NapB. The cofactor is [4Fe-4S] cluster. Mo-bis(molybdopterin guanine dinucleotide) serves as cofactor. Predicted to be exported by the Tat system. The position of the signal peptide cleavage has not been experimentally proven.

It is found in the periplasm. It catalyses the reaction 2 Fe(II)-[cytochrome] + nitrate + 2 H(+) = 2 Fe(III)-[cytochrome] + nitrite + H2O. In terms of biological role, catalytic subunit of the periplasmic nitrate reductase complex NapAB. Receives electrons from NapB and catalyzes the reduction of nitrate to nitrite. The protein is Periplasmic nitrate reductase of Actinobacillus succinogenes (strain ATCC 55618 / DSM 22257 / CCUG 43843 / 130Z).